A 347-amino-acid polypeptide reads, in one-letter code: Gibberellin 3-beta-dioxygenase 2 (347 aa).

The 105-residue stretch at 197 to 301 folds into the Fe2OG dioxygenase domain; sequence DFQGTQAVIQ…RFSMAYLWGP (105 aa). Residues His-225, Asp-227, and His-282 each coordinate Fe cation. Arg-292 is a catalytic residue. Residue Arg-292 participates in 2-oxoglutarate binding.

This sequence belongs to the iron/ascorbate-dependent oxidoreductase family. GA3OX subfamily. L-ascorbate is required as a cofactor. It depends on Fe(2+) as a cofactor. Highly expressed in seedlings but also expressed in roots, leaves, stems, flowers, siliques and seeds. Detected predominantly in the hypocotyl and roots of young seedlings and in the petioles and vasculature of leaves. Not expressed in the shoot apical meristem, but found in the elongation zone, the quiescent center cells and the columella cells of the root tips. Found in the cortex and the endodermis of the embryo axis in germinating seeds.

It catalyses the reaction gibberellin A20 + 2-oxoglutarate + O2 = gibberellin A1 + succinate + CO2. It functions in the pathway plant hormone biosynthesis; gibberellin biosynthesis. Its function is as follows. Converts the inactive gibberellin (GA) precursors GA9 and GA20 in the bioactives gibberellins GA4 and GA1. Involved in the production of bioactive GA for vegetative growth and development. This Arabidopsis thaliana (Mouse-ear cress) protein is Gibberellin 3-beta-dioxygenase 2.